Reading from the N-terminus, the 993-residue chain is Testis-expressed protein 13C (993 aa).

3 disordered regions span residues 281 to 381, 520 to 547, and 894 to 959; these read QEET…SLKK, DSKS…SHSL, and FSKS…PVNW. The span at 325–335 shows a compositional bias: polar residues; sequence GMTSQGDSSSH. A compositionally biased stretch (basic and acidic residues) spans 353–364; it reads SRSHSLEKKPVM. Over residues 944-957 the composition is skewed to polar residues; the sequence is ESQQQKPASCSSPV. A RanBP2-type zinc finger spans residues 955-984; it reads SPVNWACPWCNAMNFPRNKVCSKCKRVRMP.

It belongs to the TEX13 family.

This chain is Testis-expressed protein 13C, found in Homo sapiens (Human).